We begin with the raw amino-acid sequence, 347 residues long: Histone deacetylase 11 (347 aa).

Residues 14–326 form a histone deacetylase region; the sequence is TRWPIVYSPR…LNLFGLGLIG (313 aa). Residue His-143 is part of the active site.

It belongs to the histone deacetylase family. Interacts with HDAC6. Weakly expressed in most tissues. Strongly expressed in brain, heart, skeletal muscle, kidney and testis.

It localises to the nucleus. The catalysed reaction is N(6)-acetyl-L-lysyl-[histone] + H2O = L-lysyl-[histone] + acetate. Its function is as follows. Responsible for the deacetylation of lysine residues on the N-terminal part of the core histones (H2A, H2B, H3 and H4). Histone deacetylation gives a tag for epigenetic repression and plays an important role in transcriptional regulation, cell cycle progression and developmental events. Histone deacetylases act via the formation of large multiprotein complexes. This chain is Histone deacetylase 11 (HDAC11), found in Homo sapiens (Human).